A 493-amino-acid polypeptide reads, in one-letter code: Glycerol kinase (493 aa).

Threonine 11 is an ADP binding site. Threonine 11, threonine 12, and serine 13 together coordinate ATP. Residue threonine 11 participates in sn-glycerol 3-phosphate binding. Arginine 15 contacts ADP. Sn-glycerol 3-phosphate contacts are provided by arginine 80, glutamate 81, tyrosine 132, and aspartate 241. Arginine 80, glutamate 81, tyrosine 132, aspartate 241, and glutamine 242 together coordinate glycerol. ADP-binding residues include threonine 263 and glycine 306. Threonine 263, glycine 306, glutamine 310, and glycine 408 together coordinate ATP. Glycine 408 contributes to the ADP binding site.

This sequence belongs to the FGGY kinase family.

The catalysed reaction is glycerol + ATP = sn-glycerol 3-phosphate + ADP + H(+). Its pathway is polyol metabolism; glycerol degradation via glycerol kinase pathway; sn-glycerol 3-phosphate from glycerol: step 1/1. Inhibited by fructose 1,6-bisphosphate (FBP). Key enzyme in the regulation of glycerol uptake and metabolism. Catalyzes the phosphorylation of glycerol to yield sn-glycerol 3-phosphate. This chain is Glycerol kinase, found in Cereibacter sphaeroides (strain KD131 / KCTC 12085) (Rhodobacter sphaeroides).